Consider the following 142-residue polypeptide: Large ribosomal subunit protein uL13 (142 aa).

The protein belongs to the universal ribosomal protein uL13 family. In terms of assembly, part of the 50S ribosomal subunit.

Functionally, this protein is one of the early assembly proteins of the 50S ribosomal subunit, although it is not seen to bind rRNA by itself. It is important during the early stages of 50S assembly. In Opitutus terrae (strain DSM 11246 / JCM 15787 / PB90-1), this protein is Large ribosomal subunit protein uL13.